We begin with the raw amino-acid sequence, 670 residues long: Beta-lactam-inducible penicillin-binding protein (670 aa).

A helical transmembrane segment spans residues 4–24 (IKIVPLILIVVVVGFGIYFYA). A penicillin-binding residues include S25 and S405. S405 functions as the Acyl-ester intermediate in the catalytic mechanism.

Belongs to the transpeptidase family.

It is found in the cell membrane. This is Beta-lactam-inducible penicillin-binding protein (pbp) from Staphylococcus aureus.